The chain runs to 162 residues: MQFSLSYLISIFYIILITSETTAFSPKRPNLYIWLAQNSYICDPTLLNKRTHRFLTPWESVRLRCSCGDPLATKSACGRKHGNSNQKLACFRLPDPCLREYAVIFEHGGNRLSVPLPPSKPHRIVTAVRKTVTTKHSQRTPKIVSTIPVGAVLRVKKVKEKL.

A helical transmembrane segment spans residues 6-24; it reads SYLISIFYIILITSETTAF.

Its subcellular location is the membrane. This is an uncharacterized protein from Caenorhabditis elegans.